The primary structure comprises 778 residues: Subtilisin-like protease SBT3.6 (778 aa).

The first 22 residues, 1 to 22 (MMNYRTSIYVVLSLVIFLNVQR), serve as a signal peptide directing secretion. Residues 23–113 (SFVAESSAKR…VIPDSFYKLA (91 aa)) constitute a propeptide, activation peptide. An Inhibitor I9 domain is found at 34–113 (VHIVYLGEKQ…VIPDSFYKLA (80 aa)). A glycan (N-linked (GlcNAc...) asparagine) is linked at asparagine 69. The Peptidase S8 domain occupies 117-625 (TWDYLGLSAA…GGLVNPEKSA (509 aa)). Aspartate 147 (charge relay system) is an active-site residue. N-linked (GlcNAc...) asparagine glycosylation is found at asparagine 158, asparagine 180, asparagine 202, and asparagine 206. The Charge relay system role is filled by histidine 222. 4 N-linked (GlcNAc...) asparagine glycosylation sites follow: asparagine 237, asparagine 399, asparagine 414, and asparagine 541. A PA domain is found at 388–483 (SLVYPENPGN…ELGTDILLYT (96 aa)). The active-site Charge relay system is the serine 556. 3 N-linked (GlcNAc...) asparagine glycosylation sites follow: asparagine 648, asparagine 724, and asparagine 759.

It belongs to the peptidase S8 family.

Its subcellular location is the secreted. The polypeptide is Subtilisin-like protease SBT3.6 (Arabidopsis thaliana (Mouse-ear cress)).